Reading from the N-terminus, the 738-residue chain is MTDAPFDRADIDALLDARHPDPFACLGPHRVGDATVVRTLLPGALRVRAIAAGGGVLGELRQVDPAGCFAGALPDGRERGERPRYRLSIDWPDARQDVEDAYAFGTLLDEDALARFAAGDPRAALACLGARALDMDGVPGVRFAVWAPGASRVSVVGDFNGWDARRHPMRLRRPWGVWELFVPRIGAGERYKFALRARDGAALPLKADPCACRTEAPPRTASIVADLDALERFGWHDDAWLRARASLDLAHAPVSIYEVHPESWLRVAAEGNRSATWDELAQRLIPYAAGMGFSHVELTPIAEYPFGGSWGYQSLSPFAPSARFGPPEGFARFVEHAHAAGLGVIVDWVPAHFPDDPHGLGKFDGTALFEHADPREGWHPDWHTHVFNVGRREVGAFLIASALAWAHRYHVDGIRVDAVASMLYRDYSRAAGEWVPNVYGGRENLESIAFLKHFNDTLHGPAAPPGVATFAEESTAWPGVTAPTAEHGLGFDFKWNMGWMHDTLAYLREDPIHRRHHHDRLTFGLVYAFSERFVLPLSHDEVVHGKGSLAAKMPGDAWQRLANLRAYFGFMWAHPGKKLLFMGGEFAQWGEFAHDATPQWDLLDAPAHRGVQRLVRDLNRLHAAEPALHALDDRPAGFAWLVGDDRNNSVFAFVRRDDAGRMLVAVCNFTPVPRTDYRLGLPAPGRWAEVLNTDGAAYGGTDAGNGGALQADEIPAHGERWSAALRLPPLATLWLRPA.

Catalysis depends on D417, which acts as the Nucleophile. E472 functions as the Proton donor in the catalytic mechanism.

Belongs to the glycosyl hydrolase 13 family. GlgB subfamily. In terms of assembly, monomer.

It catalyses the reaction Transfers a segment of a (1-&gt;4)-alpha-D-glucan chain to a primary hydroxy group in a similar glucan chain.. It functions in the pathway glycan biosynthesis; glycogen biosynthesis. Its function is as follows. Catalyzes the formation of the alpha-1,6-glucosidic linkages in glycogen by scission of a 1,4-alpha-linked oligosaccharide from growing alpha-1,4-glucan chains and the subsequent attachment of the oligosaccharide to the alpha-1,6 position. This chain is 1,4-alpha-glucan branching enzyme GlgB, found in Burkholderia pseudomallei (strain 1106a).